The sequence spans 100 residues: Large ribosomal subunit protein mL53 (100 aa).

The protein belongs to the mitochondrion-specific ribosomal protein mL53 family. As to quaternary structure, component of the mitochondrial large ribosomal subunit (mt-LSU). Mature yeast 74S mitochondrial ribosomes consist of a small (37S) and a large (54S) subunit. The 37S small subunit contains a 15S ribosomal RNA (15S mt-rRNA) and at least 32 different proteins. The 54S large subunit contains a 21S rRNA (21S mt-rRNA) and at least 45 different proteins.

It localises to the mitochondrion. Its function is as follows. Component of the mitochondrial ribosome (mitoribosome), a dedicated translation machinery responsible for the synthesis of mitochondrial genome-encoded proteins, including at least some of the essential transmembrane subunits of the mitochondrial respiratory chain. The mitoribosomes are attached to the mitochondrial inner membrane and translation products are cotranslationally integrated into the membrane. This Schizosaccharomyces pombe (strain 972 / ATCC 24843) (Fission yeast) protein is Large ribosomal subunit protein mL53 (mrpl44).